Here is a 303-residue protein sequence, read N- to C-terminus: Mitochondrial basic amino acids transporter (303 aa).

The next 6 helical transmembrane spans lie at 2–22 (ALDFLAGCAGGVAGVLVGHPF), 61–81 (GLGSPLMGLTFINALVFGVQG), 96–116 (FLAGAAAGAIQCVICCPMELA), 153–172 (GMVSTLLRETPSFGVYFLTY), 187–207 (LLVPKLLLAGGTSGIVSWLST), and 255–275 (LLRAFPVNAATFATVTVVLTY). Solcar repeat units lie at residues 2–86 (ALDF…TLRA), 90–178 (DSPL…LTRA), and 185–275 (DRLL…VLTY). Residues 282–303 (GPEGEAVPAAPAGPALAQPSSL) form a disordered region. Residues 284 to 303 (EGEAVPAAPAGPALAQPSSL) show a composition bias toward low complexity.

The protein belongs to the mitochondrial carrier (TC 2.A.29) family.

Its subcellular location is the mitochondrion inner membrane. The catalysed reaction is L-lysine(out) + L-arginine(in) = L-lysine(in) + L-arginine(out). The enzyme catalyses L-histidine(out) + L-arginine(in) = L-histidine(in) + L-arginine(out). It carries out the reaction L-ornithine(in) + L-arginine(out) = L-ornithine(out) + L-arginine(in). It catalyses the reaction L-homoarginine(in) + L-arginine(out) = L-homoarginine(out) + L-arginine(in). The catalysed reaction is N(omega)-methyl-L-arginine(in) + L-arginine(out) = N(omega)-methyl-L-arginine(out) + L-arginine(in). The enzyme catalyses L-arginine(in) = L-arginine(out). It carries out the reaction L-lysine(in) = L-lysine(out). It catalyses the reaction L-ornithine(in) = L-ornithine(out). The catalysed reaction is L-histidine(out) = L-histidine(in). Functionally, mitochondrial transporter of arginine, lysine, homoarginine, methylarginine and, to a much lesser extent, ornithine and histidine. Does not transport carnitine nor acylcarnitines. Functions by both counter-exchange and uniport mechanisms. Plays a physiological role in the import of basic amino acids into mitochondria for mitochondrial protein synthesis and amino acid degradation. In Homo sapiens (Human), this protein is Mitochondrial basic amino acids transporter.